Here is a 671-residue protein sequence, read N- to C-terminus: DNA ligase (671 aa).

NAD(+)-binding positions include 32-36, 81-82, and E113; these read DAEYD and SL. The active-site N6-AMP-lysine intermediate is K115. NAD(+)-binding residues include R136, E173, K290, and K314. Zn(2+) is bound by residues C408, C411, C426, and C432. Residues 593–671 form the BRCT domain; the sequence is EIDSPFAGKT…EAEMIRLLGA (79 aa).

Belongs to the NAD-dependent DNA ligase family. LigA subfamily. Requires Mg(2+) as cofactor. Mn(2+) serves as cofactor.

It catalyses the reaction NAD(+) + (deoxyribonucleotide)n-3'-hydroxyl + 5'-phospho-(deoxyribonucleotide)m = (deoxyribonucleotide)n+m + AMP + beta-nicotinamide D-nucleotide.. Functionally, DNA ligase that catalyzes the formation of phosphodiester linkages between 5'-phosphoryl and 3'-hydroxyl groups in double-stranded DNA using NAD as a coenzyme and as the energy source for the reaction. It is essential for DNA replication and repair of damaged DNA. This chain is DNA ligase, found in Salmonella newport (strain SL254).